Reading from the N-terminus, the 78-residue chain is Putative defensin-like protein 288 (78 aa).

Positions 1–21 (MSNLRLTIAVFLAALFQTLWW) are cleaved as a signal peptide.

The protein belongs to the DEFL family.

The protein localises to the secreted. This Arabidopsis thaliana (Mouse-ear cress) protein is Putative defensin-like protein 288.